The following is a 94-amino-acid chain: Small ribosomal subunit protein uS17 (94 aa).

The segment at Met1–Tyr22 is disordered.

It belongs to the universal ribosomal protein uS17 family. Part of the 30S ribosomal subunit.

Its function is as follows. One of the primary rRNA binding proteins, it binds specifically to the 5'-end of 16S ribosomal RNA. This chain is Small ribosomal subunit protein uS17, found in Kineococcus radiotolerans (strain ATCC BAA-149 / DSM 14245 / SRS30216).